A 61-amino-acid chain; its full sequence is MIIAFKIVFVNIFSLQHNAAIEVSLTAEYAMHTLKTKIRRKSFHLQMYHTFLNIARKAEKI.

This is an uncharacterized protein from Bacillus subtilis (strain 168).